A 137-amino-acid polypeptide reads, in one-letter code: Large ribosomal subunit protein uL16 (137 aa).

It belongs to the universal ribosomal protein uL16 family. Part of the 50S ribosomal subunit.

Functionally, binds 23S rRNA and is also seen to make contacts with the A and possibly P site tRNAs. The chain is Large ribosomal subunit protein uL16 from Psychrobacter arcticus (strain DSM 17307 / VKM B-2377 / 273-4).